The primary structure comprises 130 residues: Small ribosomal subunit protein uS9 (130 aa).

Belongs to the universal ribosomal protein uS9 family.

In Polaromonas naphthalenivorans (strain CJ2), this protein is Small ribosomal subunit protein uS9.